Consider the following 260-residue polypeptide: uncharacterized protein (260 aa).

This is an uncharacterized protein from Methanocaldococcus jannaschii (strain ATCC 43067 / DSM 2661 / JAL-1 / JCM 10045 / NBRC 100440) (Methanococcus jannaschii).